We begin with the raw amino-acid sequence, 274 residues long: MTIDTPAREDQTLAATHRAMWALGDYALMAEEVMAPLGPILVAAAGIGPGVRVLDVAAGSGNISLPAAKTGATVISTDLTPELLQRSQARAAQQGLTLQYQEANAQALPFADDEFDTVISAIGVMFAPDHQAAADELVRVCRPGGTIGVISWTCEGFFGRMLATIRPYRPSVSADLPPSALWGREAYVTGLLGDGVTGLKTARGLLEVKRFDTAQAVHDYFKNNYGPTIEAYAHIGDNAVLAAELDRQLVELAAQYLSDGVMEWEYLLLTAEKR.

The N-terminal stretch at 1–30 (MTIDTPAREDQTLAATHRAMWALGDYALMA) is a signal peptide.

This sequence to M.tuberculosis Rv1403c.

This is an uncharacterized protein from Mycobacterium bovis (strain ATCC BAA-935 / AF2122/97).